The primary structure comprises 300 residues: Protoheme IX farnesyltransferase (300 aa).

Transmembrane regions (helical) follow at residues 24 to 44, 46 to 66, 99 to 119, 122 to 142, 145 to 165, 176 to 196, 220 to 240, 244 to 264, and 275 to 295; these read GLAI…IHEF, LETI…VGAS, AFTI…MINP, AMFG…LKTV, LSVF…WVAA, LFLI…WFLF, IVLY…GYTG, LTPV…VYAI, and AKTL…VYIL.

Belongs to the UbiA prenyltransferase family. Protoheme IX farnesyltransferase subfamily.

Its subcellular location is the cell inner membrane. It catalyses the reaction heme b + (2E,6E)-farnesyl diphosphate + H2O = Fe(II)-heme o + diphosphate. The protein operates within porphyrin-containing compound metabolism; heme O biosynthesis; heme O from protoheme: step 1/1. In terms of biological role, converts heme B (protoheme IX) to heme O by substitution of the vinyl group on carbon 2 of heme B porphyrin ring with a hydroxyethyl farnesyl side group. In Flavobacterium psychrophilum (strain ATCC 49511 / DSM 21280 / CIP 103535 / JIP02/86), this protein is Protoheme IX farnesyltransferase.